A 783-amino-acid polypeptide reads, in one-letter code: Ras and Rab interactor 1 (783 aa).

Methionine 1 bears the N-acetylmethionine mark. Residues 1–53 (MESPGESGAGSPGAPSPSSFTTGHLAREKPAQDPLYDVPNASGGQAGGPQRPG) form a disordered region. Phosphoserine is present on residues serine 3 and serine 16. Tyrosine 36 carries the post-translational modification Phosphotyrosine; by ABL1 and ABL2. In terms of domain architecture, SH2 spans 69–163 (WLQLQANAAA…ILLLPLQLPR (95 aa)). 4 positions are modified to phosphoserine: serine 210, serine 258, serine 333, and serine 337. Disordered stretches follow at residues 250-282 (STET…ERLP) and 295-342 (YRVP…HLGR). Over residues 257 to 269 (LSPPAVPPPPVPV) the composition is skewed to pro residues. The tract at residues 294-727 (GYRVPAGSGP…GSGQSEARSR (434 aa)) is ras and 14-3-3 protein binding region. The span at 317-334 (GSPSSSEEEGVPGSRGSP) shows a compositional bias: low complexity. Serine 351 carries the phosphoserine; by PKD/PRKD1 modification. Positions 456-598 (LAADGSLGRL…LSGLGQAHTL (143 aa)) constitute a VPS9 domain. 2 positions are modified to phosphoserine: serine 609 and serine 611. A Ras-associating domain is found at 624 to 706 (FQHLLRVAYQ…GYLVYRRAEW (83 aa)). At arginine 692 the chain carries Omega-N-methylarginine. Residues 709–783 (TQGAVTEEEG…EAEGSRAAEE (75 aa)) are disordered. Positions 762 to 772 (QAQEGPAQPGE) are enriched in low complexity.

Belongs to the RIN (Ras interaction/interference) family. In terms of assembly, interacts with the GTP-bound form of Ras proteins (NRAS, HRAS and KRAS). This interaction prevents the association between RAF1 and Ras. Interacts with 14-3-3 proteins YWHAB, YWHAE and YWHAZ when phosphorylated on Ser-351. Interacts with the SH3 domain of ABL1 and ABL2. Interacts with RAB5A. The interaction with Ras is probably regulated and antagonized by the interaction with 14-3-3 proteins. The interaction with 14-3-3 proteins is regulated by phosphorylation on Ser-351. In terms of processing, phosphorylated on tyrosine residues by ABL1 and ABL2. Phosphorylation at Ser-351 by PRKD1 induces interaction with 14-3-3 proteins. As to expression, expressed in all tissues examined with high levels in brain, placenta and pancreas.

The protein localises to the cytoplasm. It localises to the membrane. Its subcellular location is the cytoskeleton. In terms of biological role, ras effector protein, which may serve as an inhibitory modulator of neuronal plasticity in aversive memory formation. Can affect Ras signaling at different levels. First, by competing with RAF1 protein for binding to activated Ras. Second, by enhancing signaling from ABL1 and ABL2, which regulate cytoskeletal remodeling. Third, by activating RAB5A, possibly by functioning as a guanine nucleotide exchange factor (GEF) for RAB5A, by exchanging bound GDP for free GTP, and facilitating Ras-activated receptor endocytosis. The sequence is that of Ras and Rab interactor 1 (RIN1) from Homo sapiens (Human).